A 27-amino-acid polypeptide reads, in one-letter code: Delta-conotoxin TsVIA (27 aa).

3 disulfides stabilise this stretch: C1-C17, C8-C21, and C16-C25.

Belongs to the conotoxin O1 superfamily. As to expression, expressed by the venom duct.

The protein localises to the secreted. Functionally, delta-conotoxins bind to site 6 of voltage-gated sodium channels (Nav) and inhibit the inactivation process. This toxin inhibits tetrodotoxin(TTX)-sensitive sodium channels. A test on mouse Nav1.6/SCN8A confirms this sensitivity. This is Delta-conotoxin TsVIA from Conus tessulatus (Tessellate cone).